We begin with the raw amino-acid sequence, 1438 residues long: DNA polymerase III PolC-type (1438 aa).

In terms of domain architecture, Exonuclease spans 422-578; sequence YVVFDVETTG…YDTEATAYIF (157 aa).

Belongs to the DNA polymerase type-C family. PolC subfamily.

Its subcellular location is the cytoplasm. It carries out the reaction DNA(n) + a 2'-deoxyribonucleoside 5'-triphosphate = DNA(n+1) + diphosphate. In terms of biological role, required for replicative DNA synthesis. This DNA polymerase also exhibits 3' to 5' exonuclease activity. The chain is DNA polymerase III PolC-type from Staphylococcus aureus (strain MSSA476).